We begin with the raw amino-acid sequence, 505 residues long: Trans-cinnamate 4-monooxygenase (505 aa).

A helical membrane pass occupies residues 3–23; the sequence is LILLEKSLLAVFFAVIFSIIV. Residues 213 to 218 and A306 each bind (E)-cinnamate; that span reads RSRLAQ. A heme-binding site is contributed by C447.

The protein belongs to the cytochrome P450 family. Requires heme as cofactor. In terms of tissue distribution, mostly expressed in stems, and, to a lower extent, in bulbs, roots, leaves and flowers.

It localises to the membrane. It catalyses the reaction (E)-cinnamate + reduced [NADPH--hemoprotein reductase] + O2 = (E)-4-coumarate + oxidized [NADPH--hemoprotein reductase] + H2O + H(+). It functions in the pathway alkaloid biosynthesis. It participates in phenylpropanoid metabolism; trans-4-coumarate biosynthesis; trans-4-coumarate from trans-cinnamate: step 1/1. In terms of biological role, catalyzes the first oxidative step of the phenylpropanoid pathway in higher plants by transforming trans-cinnamate into p-coumarate. The compounds formed by this pathway are essential components for lignification, pollination, and defense against ultraviolet light, predators and pathogens. Trans-4-coumarate is a precursor to all amaryllidaceae alkaloids such as galanthamine, lycorine and haemanthamine, and including haemanthamine- and crinamine-type alkaloids, promising anticancer agents. This is Trans-cinnamate 4-monooxygenase from Narcissus pseudonarcissus (Daffodil).